A 500-amino-acid chain; its full sequence is Lysine--tRNA ligase (500 aa).

Residues glutamate 406 and glutamate 413 each contribute to the Mg(2+) site.

This sequence belongs to the class-II aminoacyl-tRNA synthetase family. Homodimer. It depends on Mg(2+) as a cofactor.

It localises to the cytoplasm. It carries out the reaction tRNA(Lys) + L-lysine + ATP = L-lysyl-tRNA(Lys) + AMP + diphosphate. The polypeptide is Lysine--tRNA ligase (Sulfolobus acidocaldarius (strain ATCC 33909 / DSM 639 / JCM 8929 / NBRC 15157 / NCIMB 11770)).